The primary structure comprises 260 residues: DNA repair protein RecO (260 aa).

The protein belongs to the RecO family.

Functionally, involved in DNA repair and RecF pathway recombination. This chain is DNA repair protein RecO, found in Chlorobaculum parvum (strain DSM 263 / NCIMB 8327) (Chlorobium vibrioforme subsp. thiosulfatophilum).